Consider the following 337-residue polypeptide: Pyruvate dehydrogenase E1 component subunit beta (337 aa).

Position 73 (glutamate 73) interacts with thiamine diphosphate.

Heterodimer of an alpha and a beta chain. Thiamine diphosphate is required as a cofactor.

It carries out the reaction N(6)-[(R)-lipoyl]-L-lysyl-[protein] + pyruvate + H(+) = N(6)-[(R)-S(8)-acetyldihydrolipoyl]-L-lysyl-[protein] + CO2. The pyruvate dehydrogenase complex catalyzes the overall conversion of pyruvate to acetyl-CoA and CO(2). It contains multiple copies of three enzymatic components: pyruvate dehydrogenase (E1), dihydrolipoamide acetyltransferase (E2) and lipoamide dehydrogenase (E3). The protein is Pyruvate dehydrogenase E1 component subunit beta (pdhB) of Leifsonia xyli subsp. xyli (strain CTCB07).